The primary structure comprises 350 residues: Arabinogalactan endo-beta-1,4-galactanase (350 aa).

The first 16 residues, 1 to 16 (MFASLLLAALPLLTHA), serve as a signal peptide directing secretion. N-linked (GlcNAc...) asparagine glycosylation is present at Asn-128. The active-site Proton donor is the Glu-152. The active-site Nucleophile is Glu-262.

It belongs to the glycosyl hydrolase 53 family. In terms of processing, glycosylated.

It catalyses the reaction The enzyme specifically hydrolyzes (1-&gt;4)-beta-D-galactosidic linkages in type I arabinogalactans.. This is Arabinogalactan endo-beta-1,4-galactanase (gal1) from Aspergillus aculeatus.